Here is an 864-residue protein sequence, read N- to C-terminus: MPNVLLPPKESNLFKRILKCYEQKQYKNGLKFCKMILSNPKFAEHGETLAMKGLTLNCLGKKEEAYEFVRKGLRNDVKSHVCWHVYGLLQRSDKKYDEAIKCYRNALKLDKDNLQILRDLSLLQIQMRDLEGYRETRYQLLQLRPTQRASWIGYAIAYHLLKDYDMALKLLEEFRQTQQVPPNKIDYEYSELILYQNQVMREADLLQESLEHIEMYEKQICDKLLVEEIKGEILLKLGRLKEASEVFKNLIDRNAENWCYYEGLEKALQISTLEERLQIYEEISKQHPKAITPRRLPLTLVPGERFRELMDKFLRVNFSKGCPPLFTTLKSLYYNTEKVSIIQELVTNYEASLKTCDFFSPYENGEKEPPTTLLWVQYFLAQHFDKLGQYSLALDYINAAIASTPTLIELFYMKAKIYKHIGNLKEAAKWMDEAQSLDTADRFINSKCAKYMLRANMIKEAEEMCSKFTREGTSAMENLNEMQCMWFQTECISAYQRLGRYGDALKKCHEVERHFFEITDDQFDFHTYCMRKMTLRAYVDLLRLEDILRRHAFYFKAARSAIEIYLKLYDNPLTNESKQQEINSENLSAKELKKMLSKQRRAQKKAKLEEERKHAERERQQKNQKKKRDEEEEEASGLKEELIPEKLERVENPLEEAVKFLIPLKNLVADNIDTHLLAFEIYFRKGKFLLMLQSVKRAFAINSNNPWLHECLIRFSKSVSNHSNLPDIVSKVLSQEMQKIFVKKDLESFNEDFLKRNATSLQHLLSGAKMMYFLDKSRQEKAIAIATRLDETIKDKDVKTLIKVSEALLDGSFGNCSSQYEEYRMACHNLLPFTSAFLPAVNEVDNPNVALNHTANYDVLANEI.

TPR repeat units follow at residues 46–79 (GETL…DVKS), 80–113 (HVCW…DKDN), 148–184 (RASW…PPNK), 224–257 (LLVE…NAEN), 374–407 (LWVQ…TPTL), 409–441 (ELFY…DTAD), and 485–518 (MWFQ…FFEI). Positions 603-638 (QKKAKLEEERKHAERERQQKNQKKKRDEEEEEASGL) are disordered. Residues 606–621 (AKLEEERKHAERERQQ) are compositionally biased toward basic and acidic residues.

In terms of assembly, component of the N-terminal acetyltransferase A (NatA) complex composed of NAA10 and NAA16.

Functionally, auxillary subunit of the N-terminal acetyltransferase A (NatA) complex which displays alpha (N-terminal) acetyltransferase activity. The protein is N-alpha-acetyltransferase 16, NatA auxiliary subunit (NAA16) of Homo sapiens (Human).